Consider the following 237-residue polypeptide: Ribonuclease PH (237 aa).

Residues arginine 86 and 124 to 126 each bind phosphate; that span reads GTR.

The protein belongs to the RNase PH family. As to quaternary structure, homohexameric ring arranged as a trimer of dimers.

The enzyme catalyses tRNA(n+1) + phosphate = tRNA(n) + a ribonucleoside 5'-diphosphate. Phosphorolytic 3'-5' exoribonuclease that plays an important role in tRNA 3'-end maturation. Removes nucleotide residues following the 3'-CCA terminus of tRNAs; can also add nucleotides to the ends of RNA molecules by using nucleoside diphosphates as substrates, but this may not be physiologically important. Probably plays a role in initiation of 16S rRNA degradation (leading to ribosome degradation) during starvation. The chain is Ribonuclease PH from Shewanella baltica (strain OS223).